The following is a 548-amino-acid chain: Chaperonin GroEL (548 aa).

ATP contacts are provided by residues 30–33, lysine 51, 87–91, glycine 415, 479–481, and aspartate 495; these read TLGP, DGTTT, and NAA. A disordered region spans residues 524-548; that stretch reads LPKEDKSSDSSSSPAGGMGGMGGMM. Gly residues predominate over residues 539–548; that stretch reads GGMGGMGGMM.

The protein belongs to the chaperonin (HSP60) family. As to quaternary structure, forms a cylinder of 14 subunits composed of two heptameric rings stacked back-to-back. Interacts with the co-chaperonin GroES.

The protein resides in the cytoplasm. The catalysed reaction is ATP + H2O + a folded polypeptide = ADP + phosphate + an unfolded polypeptide.. In terms of biological role, together with its co-chaperonin GroES, plays an essential role in assisting protein folding. The GroEL-GroES system forms a nano-cage that allows encapsulation of the non-native substrate proteins and provides a physical environment optimized to promote and accelerate protein folding. The polypeptide is Chaperonin GroEL (Buchnera aphidicola subsp. Acyrthosiphon pisum (strain 5A)).